A 110-amino-acid polypeptide reads, in one-letter code: Large ribosomal subunit protein uL22 (110 aa).

The protein belongs to the universal ribosomal protein uL22 family. As to quaternary structure, part of the 50S ribosomal subunit.

In terms of biological role, this protein binds specifically to 23S rRNA; its binding is stimulated by other ribosomal proteins, e.g. L4, L17, and L20. It is important during the early stages of 50S assembly. It makes multiple contacts with different domains of the 23S rRNA in the assembled 50S subunit and ribosome. Its function is as follows. The globular domain of the protein is located near the polypeptide exit tunnel on the outside of the subunit, while an extended beta-hairpin is found that lines the wall of the exit tunnel in the center of the 70S ribosome. This chain is Large ribosomal subunit protein uL22, found in Shewanella baltica (strain OS223).